The following is a 413-amino-acid chain: Enolase (413 aa).

Q170 contributes to the (2R)-2-phosphoglycerate binding site. E212 serves as the catalytic Proton donor. D245, E286, and D313 together coordinate Mg(2+). Positions 338, 367, 368, and 389 each coordinate (2R)-2-phosphoglycerate. Catalysis depends on K338, which acts as the Proton acceptor.

It belongs to the enolase family. It depends on Mg(2+) as a cofactor.

Its subcellular location is the cytoplasm. It is found in the secreted. The protein resides in the cell surface. It catalyses the reaction (2R)-2-phosphoglycerate = phosphoenolpyruvate + H2O. It functions in the pathway carbohydrate degradation; glycolysis; pyruvate from D-glyceraldehyde 3-phosphate: step 4/5. In terms of biological role, catalyzes the reversible conversion of 2-phosphoglycerate (2-PG) into phosphoenolpyruvate (PEP). It is essential for the degradation of carbohydrates via glycolysis. The sequence is that of Enolase from Neorickettsia sennetsu (strain ATCC VR-367 / Miyayama) (Ehrlichia sennetsu).